A 427-amino-acid polypeptide reads, in one-letter code: Forkhead box protein A1-B (427 aa).

The segment at residues 157-251 (KPPYSYISLI…ENGCYLRRQK (95 aa)) is a DNA-binding region (fork-head). The segment covering 256 to 272 (EKTQGGKGNQDGRKDHS) has biased composition (basic and acidic residues). The tract at residues 256–336 (EKTQGGKGNQ…HQNHSTHSLA (81 aa)) is disordered. The segment covering 285-302 (SSQMDSSSSMSNPSSSPQ) has biased composition (low complexity). Residues 323-334 (PLSSHQNHSTHS) show a composition bias toward polar residues.

As to expression, present in the vegetal pole and marginal zone but not the animal pole of gastrulae and in equal levels in the dorsal and ventral halves of both gastrulae and neurulae. At neurula stage, expressed in the notochord. During tailbud stages, expressed in the foregut, brain, hypocord, neural floor plate and in two lines of cells just dorsal and ventral to the notochord. Expressed in the adult liver.

The protein localises to the nucleus. Its function is as follows. Probable transcription factor. In Xenopus laevis (African clawed frog), this protein is Forkhead box protein A1-B (foxa1-b).